Reading from the N-terminus, the 212-residue chain is Maleylacetoacetate isomerase (212 aa).

The 83-residue stretch at 1-83 (MKLYTYYRST…YLEERYPQPA (83 aa)) folds into the GST N-terminal domain. Residues 88–211 (DPLRRARERG…HPANQPDTPA (124 aa)) form the GST C-terminal domain.

The protein belongs to the GST superfamily. Zeta family.

It catalyses the reaction 4-maleylacetoacetate = 4-fumarylacetoacetate. Its pathway is amino-acid degradation; L-phenylalanine degradation; acetoacetate and fumarate from L-phenylalanine: step 5/6. The protein is Maleylacetoacetate isomerase (maiA) of Pseudomonas aeruginosa (strain ATCC 15692 / DSM 22644 / CIP 104116 / JCM 14847 / LMG 12228 / 1C / PRS 101 / PAO1).